Here is a 273-residue protein sequence, read N- to C-terminus: Proteasome subunit beta type-5-B (273 aa).

Residues 1-57 constitute a propeptide, removed in mature form; the sequence is MKLDTSGLETTMPVIGFGSNSEMLDGFSSAPSFDLPRTTDFDGFQKKAVEMVKPAKG. Threonine 58 functions as the Nucleophile in the catalytic mechanism.

This sequence belongs to the peptidase T1B family. As to quaternary structure, component of the 20S core complex of the 26S proteasome. The 26S proteasome is composed of a core protease (CP), known as the 20S proteasome, capped at one or both ends by the 19S regulatory particle (RP/PA700). The 20S proteasome core is composed of 28 subunits that are arranged in four stacked rings, resulting in a barrel-shaped structure. The two end rings are each formed by seven alpha subunits, and the two central rings are each formed by seven beta subunits. The catalytic chamber with the active sites is on the inside of the barrel.

Its subcellular location is the cytoplasm. The protein localises to the nucleus. The catalysed reaction is Cleavage of peptide bonds with very broad specificity.. In terms of biological role, the proteasome is a multicatalytic proteinase complex which is characterized by its ability to cleave peptides with Arg, Phe, Tyr, Leu, and Glu adjacent to the leaving group at neutral or slightly basic pH. The proteasome has an ATP-dependent proteolytic activity. This is Proteasome subunit beta type-5-B (PBE2) from Arabidopsis thaliana (Mouse-ear cress).